A 419-amino-acid polypeptide reads, in one-letter code: Effector protein BipC (419 aa).

Disordered stretches follow at residues 62 to 91 and 338 to 402; these read VAGS…TVSG and LQSG…AKSQ. 2 stretches are compositionally biased toward basic and acidic residues: residues 71-91 and 380-392; these read ELAR…TVSG and TRDE…REAA.

Belongs to the SctB/SipC family.

It is found in the secreted. In Burkholderia pseudomallei (strain 1106a), this protein is Effector protein BipC (bipC).